The following is a 94-amino-acid chain: Integration host factor subunit beta (94 aa).

It belongs to the bacterial histone-like protein family. As to quaternary structure, heterodimer of an alpha and a beta chain.

Its function is as follows. This protein is one of the two subunits of integration host factor, a specific DNA-binding protein that functions in genetic recombination as well as in transcriptional and translational control. The chain is Integration host factor subunit beta from Haemophilus influenzae (strain PittGG).